The sequence spans 376 residues: Dual-specificity RNA methyltransferase RlmN (376 aa).

The active-site Proton acceptor is Glu95. Residues 101-339 (EKERATLCVS…CIVRRPRGDD (239 aa)) enclose the Radical SAM core domain. Cysteines 108 and 344 form a disulfide. [4Fe-4S] cluster is bound by residues Cys115, Cys119, and Cys122. Residues 169–170 (GE), Ser201, 223–225 (SLH), and Asn301 each bind S-adenosyl-L-methionine. Cys344 acts as the S-methylcysteine intermediate in catalysis.

Belongs to the radical SAM superfamily. RlmN family. Requires [4Fe-4S] cluster as cofactor.

It is found in the cytoplasm. The enzyme catalyses adenosine(2503) in 23S rRNA + 2 reduced [2Fe-2S]-[ferredoxin] + 2 S-adenosyl-L-methionine = 2-methyladenosine(2503) in 23S rRNA + 5'-deoxyadenosine + L-methionine + 2 oxidized [2Fe-2S]-[ferredoxin] + S-adenosyl-L-homocysteine. It carries out the reaction adenosine(37) in tRNA + 2 reduced [2Fe-2S]-[ferredoxin] + 2 S-adenosyl-L-methionine = 2-methyladenosine(37) in tRNA + 5'-deoxyadenosine + L-methionine + 2 oxidized [2Fe-2S]-[ferredoxin] + S-adenosyl-L-homocysteine. Its function is as follows. Specifically methylates position 2 of adenine 2503 in 23S rRNA and position 2 of adenine 37 in tRNAs. m2A2503 modification seems to play a crucial role in the proofreading step occurring at the peptidyl transferase center and thus would serve to optimize ribosomal fidelity. This is Dual-specificity RNA methyltransferase RlmN from Pseudoalteromonas translucida (strain TAC 125).